The primary structure comprises 461 residues: Anthocyanidin 3-O-glucoside 5-O-glucosyltransferase (461 aa).

The first 15 residues, 1 to 15 (MSRAHVLLATFPAQG), serve as a signal peptide directing secretion. Catalysis depends on His-16, which acts as the Proton acceptor. His-16 lines the an anthocyanidin pocket. Residues Gln-338, His-353, Trp-356, Asn-357, Ser-358, Glu-361, Asp-377, and Gln-378 each contribute to the UDP-alpha-D-glucose site.

The protein belongs to the UDP-glycosyltransferase family.

The catalysed reaction is an anthocyanidin 3-O-beta-D-glucoside + UDP-alpha-D-glucose = an anthocyanidin 3,5-di-O-beta-D-glucoside + UDP + 2 H(+). It participates in pigment biosynthesis; anthocyanin biosynthesis. Its function is as follows. Catalyzes the glucosylation at the O-5 position of anthocyanidin 3-glucosides to form anthocyanidin 3,5-di-O-glucosides using UDP-glucose as sugar donor. Anthocyanidin 3,5-di-O-glucosides are molecules that are responsible for pigmentation. Also acts on anthocyanidin 3-O-(6-O-malonylglucoside). Much less active with hydroxycinnamoylglucose derivatives. No activity in the absence of the 3-O-glucoside group. In Verbena hybrida (Garden vervain), this protein is Anthocyanidin 3-O-glucoside 5-O-glucosyltransferase (HGT8).